A 656-amino-acid polypeptide reads, in one-letter code: DNA ligase (656 aa).

NAD(+) is bound by residues 32-36 (DEEYD), 81-82 (SM), and glutamate 112. Catalysis depends on lysine 114, which acts as the N6-AMP-lysine intermediate. 4 residues coordinate NAD(+): arginine 135, glutamate 169, lysine 284, and lysine 308. Residues cysteine 402, cysteine 405, cysteine 418, and cysteine 423 each coordinate Zn(2+). In terms of domain architecture, BRCT spans 577 to 656 (VQKTPFTGKT…DMWKMLKEGK (80 aa)).

This sequence belongs to the NAD-dependent DNA ligase family. LigA subfamily. Requires Mg(2+) as cofactor. Mn(2+) serves as cofactor.

It catalyses the reaction NAD(+) + (deoxyribonucleotide)n-3'-hydroxyl + 5'-phospho-(deoxyribonucleotide)m = (deoxyribonucleotide)n+m + AMP + beta-nicotinamide D-nucleotide.. In terms of biological role, DNA ligase that catalyzes the formation of phosphodiester linkages between 5'-phosphoryl and 3'-hydroxyl groups in double-stranded DNA using NAD as a coenzyme and as the energy source for the reaction. It is essential for DNA replication and repair of damaged DNA. The chain is DNA ligase from Nautilia profundicola (strain ATCC BAA-1463 / DSM 18972 / AmH).